Here is a 464-residue protein sequence, read N- to C-terminus: Adenosylhomocysteinase (464 aa).

Thr-56, Asp-131, and Glu-190 together coordinate substrate. Position 191–193 (191–193 (TTT)) interacts with NAD(+). Positions 220 and 224 each coordinate substrate. Residues Asn-225, 254-259 (GFGDVG), Glu-277, Asn-312, 333-335 (IGH), and Asn-378 contribute to the NAD(+) site.

It belongs to the adenosylhomocysteinase family. The cofactor is NAD(+).

It localises to the cytoplasm. It carries out the reaction S-adenosyl-L-homocysteine + H2O = L-homocysteine + adenosine. It functions in the pathway amino-acid biosynthesis; L-homocysteine biosynthesis; L-homocysteine from S-adenosyl-L-homocysteine: step 1/1. Functionally, may play a key role in the regulation of the intracellular concentration of adenosylhomocysteine. The polypeptide is Adenosylhomocysteinase (Zymomonas mobilis subsp. mobilis (strain ATCC 31821 / ZM4 / CP4)).